The primary structure comprises 286 residues: Perivitellin-2 31 kDa subunit (286 aa).

The signal sequence occupies residues 1-30 (MVKKIHFVMERHASIVAFLLAVLALTESQA). Asn101 carries an N-linked (GlcNAc...) asparagine glycan.

The protein belongs to the tectonin family. In terms of assembly, perivitellin-2 is a dimer of heterodimers held together head-to-tail by non-covalent forces. The heterodimer is composed of the tachylectin subunit (31 kDa) and the MACPF subunit (67 kDa) that are disulfide-linked. Post-translationally, PV2 is a very high density lipoprotein (VHDL). It contains 3.75% of lipids. The major lipid classes are free sterols and phospholipids and also have significant quantities of energy-providing triacylglycerides and free fatty acids. As to expression, produced by albumen secretory cells. Found in developing eggs.

The protein localises to the secreted. Its subcellular location is the target cell membrane. Functionally, the egg defensive protein perivitellin-2 is a pore-forming two-subunit glycoprotein that affects both the nervous and digestive systems of mammals. In addition, it is a source of both structural and energetic molecules during embryonic development. The tachylectin subunit (31 kDa) binds target membranes while the MACPF subunit (67 kDa) disrupts lipid bilayers forming large pores (inner diameter of about 5.6 nm) altering the plasma membrance conductance. Both in vivo and in vitro, the protein shows wide pH range stability and is resistant to enzymatic proteolysis from gastrointestinal environments. It is cytotoxic to both epithelial and immune cells from the digestive system of mammals. It induces enterocyte death by a lytic mechanism and disrupts enterocyte monolayers in a dose-dependent manner. After oral administration to mice, it binds enterocytes and induces large dose-dependent morphological changes on their small intestine mucosa, reducing the absorptive surface. Additionally, it is detected in the Peyer's patches where it activates lymphoid follicles and triggers apoptosis. The toxin can also traverse the intestinal barrier and induce oral adaptive immunity with evidence of circulating antibody response. The toxin also shows hemagglutination properties thanks to the tachylectin subunit, but has no hemolytic activity. In addition to enterotoxin activity, the toxin also acts as a neurotoxin, since an intraperitoneal injection can induce paralysis of the mice rear limbs, followed by death. The chain is Perivitellin-2 31 kDa subunit from Pomacea maculata (Giant applesnail).